The following is a 405-amino-acid chain: Octaketide synthase 3 (405 aa).

Residues 1–10 are compositionally biased toward polar residues; the sequence is MGSIAESSPL. A disordered region spans residues 1–22; the sequence is MGSIAESSPLMSRENVEGIRKA. Cys176 is a catalytic residue. CoA contacts are provided by residues Ser283 and 320 to 323; that span reads GGRA.

It belongs to the thiolase-like superfamily. Chalcone/stilbene synthases family. As to quaternary structure, homodimer.

It participates in secondary metabolite biosynthesis; flavonoid biosynthesis. In terms of biological role, catalyzes the iterative condensations of 8 molecules of malonyl-CoA to produce aromatic octaketides, SEK4 and SEK4b, the products of the minimal polyketide synthase for the benzoisochromanequinone actinorhodin. May be involved in the biosynthesis of the octaketide barbaloin. The protein is Octaketide synthase 3 (PKS5) of Aloe arborescens (Kidachi aloe).